The sequence spans 876 residues: Leucine--tRNA ligase (876 aa).

The 'HIGH' region motif lies at 43-53 (PYPSGRIHMGH). The 'KMSKS' region signature appears at 632–636 (KMSKS). Lys635 contributes to the ATP binding site.

This sequence belongs to the class-I aminoacyl-tRNA synthetase family.

It localises to the cytoplasm. It catalyses the reaction tRNA(Leu) + L-leucine + ATP = L-leucyl-tRNA(Leu) + AMP + diphosphate. This Sinorhizobium fredii (strain NBRC 101917 / NGR234) protein is Leucine--tRNA ligase.